We begin with the raw amino-acid sequence, 864 residues long: Arf-GAP with GTPase, ANK repeat and PH domain-containing protein 1 (864 aa).

Residues 66–276 (SRSVPELKVG…QTSNGGGSLS (211 aa)) are small GTPase-like. In terms of domain architecture, GLD spans 67–241 (RSVPELKVGI…TRKKQQLSIG (175 aa)). GTP is bound by residues 78 to 85 (GNLASGKS), 122 to 126 (IRDEG), and 178 to 181 (TQDA). Disordered stretches follow at residues 266-343 (SQTS…IGSG), 405-455 (VPGK…QMAS), and 499-549 (TGLG…LSST). A compositionally biased stretch (low complexity) spans 275–289 (LSDYSSSVPSTPSTS). Residues 322 to 337 (KGSDPDKDKKGLESRA) show a composition bias toward basic and acidic residues. In terms of domain architecture, PH spans 346–591 (IPIKQGMLLK…WVQAIESQIL (246 aa)). Polar residues predominate over residues 413 to 428 (ATSSCAPVASPKTNGL). Residues 507–517 (SSPSISSTTSP) show a composition bias toward low complexity. Residues 527–537 (ANRKKHRRKKS) are compositionally biased toward basic residues. The span at 538–549 (TSNFKVDGLSST) shows a compositional bias: polar residues. One can recognise an Arf-GAP domain in the interval 612–732 (ALALQSIRNL…LFLSPLPCRD (121 aa)). Residues 627–650 (CVDCDAQSPDWASLNLGALMCIEC) form a C4-type zinc finger. ANK repeat units lie at residues 771 to 800 (DRRT…DVMA) and 804 to 833 (HGNT…PDEQ). Over residues 845-854 (KNNRNNNSNA) the composition is skewed to low complexity. A disordered region spans residues 845–864 (KNNRNNNSNAGGSGLMPTLI).

This sequence belongs to the centaurin gamma-like family. In terms of assembly, homodimer. Interacts with several subunits of the AP-3 protein complex.

It localises to the cytoplasm. Its function is as follows. GTPase-activating protein. Directly and specifically regulates the adapter protein 3 (AP-3)-dependent trafficking of proteins in the endosomal-lysosomal system. This Xenopus laevis (African clawed frog) protein is Arf-GAP with GTPase, ANK repeat and PH domain-containing protein 1 (agap1).